Consider the following 367-residue polypeptide: F-box protein At3g56470 (367 aa).

Over residues 1–18 (MVTRRRSKKKKKTKRKKQ) the composition is skewed to basic residues. A disordered region spans residues 1–24 (MVTRRRSKKKKKTKRKKQSSKEKE). In terms of domain architecture, F-box spans 26–81 (YQTFINLPCDLLQLVISRLPLKDNIRASAVCKTWHEACVSLRVIHTSPWLIYFSKT).

This chain is F-box protein At3g56470, found in Arabidopsis thaliana (Mouse-ear cress).